We begin with the raw amino-acid sequence, 108 residues long: MELVKICPEIGIVMDVDTGIVAEMRKDILVVDLNPIKEEINKLETLSKAFENSLDPRSAPLKAYDGRDNIYSVGGLFQSAFFGFWISLSILTLGLILVIGLYPKLIGL.

A helical membrane pass occupies residues 81–101; it reads FFGFWISLSILTLGLILVIGL.

This sequence belongs to the MtrB family. In terms of assembly, the complex is composed of 8 subunits; MtrA, MtrB, MtrC, MtrD, MtrE, MtrF, MtrG and MtrH.

It is found in the cell membrane. The catalysed reaction is 5-methyl-5,6,7,8-tetrahydromethanopterin + coenzyme M + 2 Na(+)(in) = 5,6,7,8-tetrahydromethanopterin + methyl-coenzyme M + 2 Na(+)(out). It functions in the pathway one-carbon metabolism; methanogenesis from CO(2); methyl-coenzyme M from 5,10-methylene-5,6,7,8-tetrahydromethanopterin: step 2/2. In terms of biological role, part of a complex that catalyzes the formation of methyl-coenzyme M and tetrahydromethanopterin from coenzyme M and methyl-tetrahydromethanopterin. This is an energy-conserving, sodium-ion translocating step. This is Tetrahydromethanopterin S-methyltransferase subunit B from Methanococcus aeolicus (strain ATCC BAA-1280 / DSM 17508 / OCM 812 / Nankai-3).